A 1581-amino-acid chain; its full sequence is ATP-binding cassette sub-family C member 8 (1581 aa).

Topologically, residues 1-30 are extracellular; that stretch reads MPLAFCGSENHSAAYRVDQGVLNNGCFVDA. A disulfide bridge links Cys-6 with Cys-26. The N-linked (GlcNAc...) asparagine glycan is linked to Asn-10. Residues 31-47 traverse the membrane as a helical segment; sequence LNVVPHVFLLFITFPIL. At 48–72 the chain is on the cytoplasmic side; sequence FIGWGSQSSKVHIHHSTWLHFPGHN. The helical transmembrane segment at 73–89 threads the bilayer; it reads LRWILTFMLLFVLVCEI. At 90 to 106 the chain is on the extracellular side; it reads AEGILSDGVTESHHLHL. A helical membrane pass occupies residues 107-123; it reads YMPAGMAFMAAVTSVVY. At 124 to 136 the chain is on the cytoplasmic side; sequence YHNIETSNFPKLL. The helical transmembrane segment at 137-153 threads the bilayer; sequence IALLVYWTLAFITKTIK. The Extracellular segment spans residues 154-169; the sequence is FVKFLDHAIGFSQLRF. A helical transmembrane segment spans residues 170–186; sequence CLTGLLVILYGMLLLVE. The Cytoplasmic portion of the chain corresponds to 187 to 303; sequence VNVIRVRRYI…AFGRRLVLSS (117 aa). The 304-residue stretch at 299-602 folds into the ABC transmembrane type-1 1 domain; it reads LVLSSTFRIL…LSSVVRSTVK (304 aa). The helical transmembrane segment at 304–319 threads the bilayer; it reads TFRILADLLGFAGPLC. The Extracellular portion of the chain corresponds to 320-356; sequence IFGIVDHLGKENDVFQPKTQFLGVYFVSSQEFLANAY. Residues 357-372 traverse the membrane as a helical segment; it reads VLAVLLFLALLLQRTF. Residues 373-438 are Cytoplasmic-facing; the sequence is LQASYYVAIE…MWFFFLCPNL (66 aa). Residues 439-454 traverse the membrane as a helical segment; sequence WAMPVQIIVGVILLYY. The Extracellular segment spans residues 455–460; the sequence is ILGVSA. A helical transmembrane segment spans residues 461 to 473; sequence LIGAAVIILLAPV. At 474-541 the chain is on the cytoplasmic side; sequence QYFVATKLSQ…SLRAFAIYTS (68 aa). The helical transmembrane segment at 542-557 threads the bilayer; that stretch reads ISIFMNTAIPIAAVLI. At 558–576 the chain is on the extracellular side; that stretch reads TFVGHVSFFKEADFSPSVA. The chain crosses the membrane as a helical span at residues 577 to 592; sequence FASLSLFHILVTPLFL. Topologically, residues 593–1012 are cytoplasmic; that stretch reads LSSVVRSTVK…YLSSAGILLL (420 aa). An ABC transporter 1 domain is found at 679-929; the sequence is VQIMGGYFTW…ECQLFEHWKT (251 aa). Positions 688, 716, 720, and 721 each coordinate ATP. Ser-720 contributes to the Mg(2+) binding site. Mg(2+) is bound at residue Gln-774. The span at 935–949 shows a compositional bias: basic and acidic residues; it reads DQELEKETVTERKAT. Residues 935–987 are disordered; it reads DQELEKETVTERKATEPPQGLSRAMSSRDGLLQDEEEEEEEAAESEEDDNLSS. Acidic residues predominate over residues 966 to 984; the sequence is LQDEEEEEEEAAESEEDDN. One can recognise an ABC transmembrane type-1 2 domain in the interval 1012–1306; sequence LSLLVFSQLL…MVRNLADMEL (295 aa). Residues 1013–1030 traverse the membrane as a helical segment; sequence SLLVFSQLLKHMVLVAID. The Extracellular segment spans residues 1031-1066; the sequence is YWLAKWTDSALTLTPAARNCSLSQECTLDQTVYAMV. An N-linked (GlcNAc...) asparagine glycan is attached at Asn-1049. Residues 1067 to 1083 traverse the membrane as a helical segment; it reads FTVLCSLGIVLCLVTSV. Residues 1084 to 1142 are Cytoplasmic-facing; the sequence is TVEWTGLKVAKRLHRSLLNRIILAPMRFFETTPLGSILNRFSSDCNTIDQHIPSTLECL. Residues 1143–1160 traverse the membrane as a helical segment; it reads SRSTLLCVSALAVISYVT. A topological domain (extracellular) is located at residue Pro-1161. A helical transmembrane segment spans residues 1162–1174; sequence VFLVALLPLAIVC. The Cytoplasmic segment spans residues 1175–1248; it reads YFIQKYFRVA…FLTAANRWLE (74 aa). The helical transmembrane segment at 1249-1264 threads the bilayer; sequence VRMEYIGACVVLIAAV. Topologically, residues 1265 to 1280 are extracellular; sequence TSISNSLHRELSAGLV. Residues 1281-1296 traverse the membrane as a helical segment; sequence GLGLTYALMVSNYLNW. Residues 1297–1581 lie on the Cytoplasmic side of the membrane; the sequence is MVRNLADMEL…VFASFVRADK (285 aa). Positions 1344 to 1578 constitute an ABC transporter 2 domain; the sequence is IQIQNLSVRY…KDSVFASFVR (235 aa). The ADP site is built by Thr-1380, Gly-1381, Gly-1383, Lys-1384, Ser-1385, and Ser-1386. An ATP-binding site is contributed by Ser-1482.

This sequence belongs to the ABC transporter superfamily. ABCC family. Conjugate transporter (TC 3.A.1.208) subfamily. As to quaternary structure, forms an heterooctamer with KCNJ11; four ABCC8/SUR1 molecules interact with one KCNJ11 homotetramer.

It is found in the cell membrane. Its activity is regulated as follows. KATP channels are regulated by cytoplasmic ATP/ADP ratios; ATP inhibits the channel by closing the pore, while ADP activates the channel. Activated by phosphatidylinositol 4,5-biphosphate (PtdIns(4,5)P2). Regulator subunit of pancreatic ATP-sensitive potassium channel (KATP), playing a major role in the regulation of insulin release. In pancreatic cells, it forms KATP channels with KCNJ11; KCNJ11 forms the channel pore while ABCC8 is required for activation and regulation. This Homo sapiens (Human) protein is ATP-binding cassette sub-family C member 8 (ABCC8).